A 305-amino-acid polypeptide reads, in one-letter code: Ribosomal protein L11 methyltransferase (305 aa).

The S-adenosyl-L-methionine site is built by T152, G173, D195, and N237.

Belongs to the methyltransferase superfamily. PrmA family.

It localises to the cytoplasm. The catalysed reaction is L-lysyl-[protein] + 3 S-adenosyl-L-methionine = N(6),N(6),N(6)-trimethyl-L-lysyl-[protein] + 3 S-adenosyl-L-homocysteine + 3 H(+). Its function is as follows. Methylates ribosomal protein L11. The chain is Ribosomal protein L11 methyltransferase from Hamiltonella defensa subsp. Acyrthosiphon pisum (strain 5AT).